The following is a 382-amino-acid chain: RNA binding protein fox-1 homolog 1 (382 aa).

Residues methionine 1 to valine 121 are disordered. Polar residues predominate over residues glutamine 70–glycine 87. A compositionally biased stretch (low complexity) spans threonine 88–aspartate 99. A compositionally biased stretch (polar residues) spans glycine 100–lysine 113. An RRM domain is found at lysine 117 to alanine 193. Residue arginine 317 is modified to Asymmetric dimethylarginine. The interval methionine 357–serine 382 is disordered.

As to quaternary structure, binds to the C-terminus of ATXN2.

The protein localises to the nucleus. It localises to the cytoplasm. Its function is as follows. RNA-binding protein that regulates alternative splicing events by binding to 5'-UGCAUGU-3' elements. Prevents binding of U2AF2 to the 3'-splice site. Regulates alternative splicing of tissue-specific exons and of differentially spliced exons during erythropoiesis. In Pongo abelii (Sumatran orangutan), this protein is RNA binding protein fox-1 homolog 1 (RBFOX1).